The sequence spans 503 residues: Maturase K (503 aa).

It belongs to the intron maturase 2 family. MatK subfamily.

The protein resides in the plastid. It is found in the chloroplast. Usually encoded in the trnK tRNA gene intron. Probably assists in splicing its own and other chloroplast group II introns. The protein is Maturase K of Stangeria eriopus (Natal grass cycad).